We begin with the raw amino-acid sequence, 442 residues long: Endothelin receptor type B (442 aa).

A signal peptide spans 1–26 (MQPPPSLCGRALVALVLACGLSRIWG). The Extracellular portion of the chain corresponds to 27-101 (EERGFPPDRA…GSIEIKETFK (75 aa)). A glycan (N-linked (GlcNAc...) asparagine) is linked at asparagine 59. The tract at residues 69–88 (AEVPKGDRTAGSPPRTISPP) is disordered. Residues 102 to 126 (YINTVVSCLVFVLGIIGNSTLLRII) form a helical membrane-spanning segment. Residues 127–137 (YKNKCMRNGPN) are Cytoplasmic-facing. Residues 138–163 (ILIASLALGDLLHIIIDIPITVYKLL) form a helical membrane-spanning segment. The Extracellular portion of the chain corresponds to 164-175 (AEDWPFGVEMCK). Cysteine 174 and cysteine 255 form a disulfide bridge. Residues 176–197 (LVPFIQKASVGITVLSLCALSI) form a helical membrane-spanning segment. The Cytoplasmic portion of the chain corresponds to 198–218 (DRYRAVASWSRIKGIGVPKWT). Residues 219-243 (AVEIVLIWVVSVVLAVPEAVGFDMI) form a helical membrane-spanning segment. Residues 244–271 (TIDYKGRYLRICLLHPTQKTAFMQFYKT) are Extracellular-facing. A helical membrane pass occupies residues 272 to 296 (AKDWWLFSFYFCLPLAITAFFYTLM). The Cytoplasmic portion of the chain corresponds to 297–324 (TCEMLRKKSGMQIALNDHLKQRREVAKT). Residue serine 305 is modified to Phosphoserine. A helical transmembrane segment spans residues 325-350 (VFCLVLVFALCWLPLHLSRILKLTIY). At 351 to 362 (DQNDPNRCELLS) the chain is on the extracellular side. A helical transmembrane segment spans residues 363 to 389 (FLLVLDYIGINMASLNSCINPIALYLV). Over 390-442 (SKRFKNCFKSCLCCWCQSFEEKQSLEEKQSCLKFKANDHGYDNFRSSNKYSSS) the chain is Cytoplasmic. S-palmitoyl cysteine attachment occurs at residues cysteine 402, cysteine 403, and cysteine 405. At serine 419 the chain carries Phosphoserine. Tyrosine 439 carries the post-translational modification Phosphotyrosine. Residues serine 440, serine 441, and serine 442 each carry the phosphoserine modification.

This sequence belongs to the G-protein coupled receptor 1 family. Endothelin receptor subfamily. EDNRB sub-subfamily.

It is found in the cell membrane. In terms of biological role, non-specific receptor for endothelin 1, 2, and 3. Mediates its action by association with G proteins that activate a phosphatidylinositol-calcium second messenger system. In Canis lupus familiaris (Dog), this protein is Endothelin receptor type B (EDNRB).